Reading from the N-terminus, the 159-residue chain is Small heat shock protein hspM (159 aa).

One can recognise a sHSP domain in the interval 1-159; it reads MFVLNFELAG…LSNNIKIQIN (159 aa). Residues 35-101 are disordered; that stretch reads MNNNNKNNLQ…NNNNKSSKTN (67 aa). Low complexity-rich tracts occupy residues 36–46 and 61–95; these read NNNNKNNLQIN and SSSS…NNNN.

This sequence belongs to the small heat shock protein (HSP20) family.

In Dictyostelium discoideum (Social amoeba), this protein is Small heat shock protein hspM (hspM).